Here is a 260-residue protein sequence, read N- to C-terminus: 14-3-3-like protein (260 aa).

A disordered region spans residues 240–260 (DMQDDGGDEIKEAAPKPDEQY). Over residues 247–260 (DEIKEAAPKPDEQY) the composition is skewed to basic and acidic residues.

This sequence belongs to the 14-3-3 family.

The sequence is that of 14-3-3-like protein from Oenothera elata subsp. hookeri (Hooker's evening primrose).